Consider the following 254-residue polypeptide: Ribosomal RNA large subunit methyltransferase E (254 aa).

The disordered stretch occupies residues 1 to 28; sequence MTTPPRGPDGRPLKVRVKKSRGRTTSSQ. The segment covering 13–22 has biased composition (basic residues); that stretch reads LKVRVKKSRG. The S-adenosyl-L-methionine site is built by glycine 80, tryptophan 82, aspartate 103, aspartate 119, and aspartate 143. The active-site Proton acceptor is the lysine 183. The tract at residues 231-254 is disordered; it reads DRAETDDAGTDGTGTAEAQAPRDQ.

This sequence belongs to the class I-like SAM-binding methyltransferase superfamily. RNA methyltransferase RlmE family.

The protein localises to the cytoplasm. It catalyses the reaction uridine(2552) in 23S rRNA + S-adenosyl-L-methionine = 2'-O-methyluridine(2552) in 23S rRNA + S-adenosyl-L-homocysteine + H(+). Its function is as follows. Specifically methylates the uridine in position 2552 of 23S rRNA at the 2'-O position of the ribose in the fully assembled 50S ribosomal subunit. In Xanthobacter autotrophicus (strain ATCC BAA-1158 / Py2), this protein is Ribosomal RNA large subunit methyltransferase E.